Reading from the N-terminus, the 511-residue chain is Inositol-3-phosphate synthase (511 aa).

The NAD(+) site is built by Gly-70, Asn-71, Asn-72, Asp-143, Ser-179, Ile-180, Gln-190, Arg-193, Ser-230, Ala-231, Asn-232, Thr-233, Gly-281, Ser-282, Asp-306, Thr-309, Asn-340, Asn-341, Asp-342, Lys-355, Gly-393, Asp-394, Asp-422, and Ser-423.

The protein belongs to the myo-inositol 1-phosphate synthase family. Requires NAD(+) as cofactor.

It is found in the cytoplasm. It catalyses the reaction D-glucose 6-phosphate = 1D-myo-inositol 3-phosphate. It functions in the pathway polyol metabolism; myo-inositol biosynthesis; myo-inositol from D-glucose 6-phosphate: step 1/2. Its function is as follows. Key enzyme in myo-inositol biosynthesis pathway that catalyzes the conversion of glucose 6-phosphate to 1-myo-inositol 1-phosphate in a NAD-dependent manner. Rate-limiting enzyme in the synthesis of all inositol-containing compounds. The polypeptide is Inositol-3-phosphate synthase (ino1) (Dictyostelium discoideum (Social amoeba)).